The sequence spans 116 residues: G antigen 2A (116 aa).

The disordered stretch occupies residues 1–116 (MSWRGRSTYR…PEEGEKQSQC (116 aa)). Composition is skewed to acidic residues over residues 31-44 (FSDE…EEGE) and 86-95 (ECEDGPDGQE). The segment covering 102–116 (EEVKTPEEGEKQSQC) has biased composition (basic and acidic residues).

The protein belongs to the GAGE family.

The chain is G antigen 2A (GAGE2A) from Homo sapiens (Human).